Consider the following 564-residue polypeptide: NAC domain-containing protein 16 (564 aa).

The NAC domain maps to 16 to 166; it reads SAPGFRFHPT…YYALYKLYKK (151 aa). Residues 115 to 172 mediate DNA binding; sequence VGLKKTLVFYRGRAPNGERTDWVMHEYTMDEEELGRCKNAKEYYALYKLYKKSGAGPK. A helical membrane pass occupies residues 535 to 555; it reads FLLLSIMGALCAIFWVFKATV.

In terms of tissue distribution, expressed in roots, rosette leaves, shoot apex, stems and flowers.

It is found in the membrane. Its subcellular location is the nucleus. In terms of biological role, transcriptional activator activated by proteolytic cleavage through regulated intramembrane proteolysis (RIP). Transcriptional activator that promotes leaf senescence by up-regulating senescence-associated genes in response to developmental and stress-induced senescence signals. Functions in salt and oxidative stress-responsive signaling pathways. Binds to the promoter of NAC029/NAP and NAC059/ORS1 genes. This is NAC domain-containing protein 16 from Arabidopsis thaliana (Mouse-ear cress).